The sequence spans 712 residues: Ribosomal RNA large subunit methyltransferase K/L (712 aa).

Positions 42–153 (QALRIVMWSR…KGRASLSIDL (112 aa)) constitute a THUMP domain.

It belongs to the methyltransferase superfamily. RlmKL family.

The protein localises to the cytoplasm. It carries out the reaction guanosine(2445) in 23S rRNA + S-adenosyl-L-methionine = N(2)-methylguanosine(2445) in 23S rRNA + S-adenosyl-L-homocysteine + H(+). The catalysed reaction is guanosine(2069) in 23S rRNA + S-adenosyl-L-methionine = N(2)-methylguanosine(2069) in 23S rRNA + S-adenosyl-L-homocysteine + H(+). Functionally, specifically methylates the guanine in position 2445 (m2G2445) and the guanine in position 2069 (m7G2069) of 23S rRNA. This is Ribosomal RNA large subunit methyltransferase K/L from Stenotrophomonas maltophilia (strain K279a).